Reading from the N-terminus, the 283-residue chain is Thymidylate synthase (283 aa).

Residue Arg-22 coordinates dUMP. The active-site Nucleophile is the Cys-160. DUMP-binding positions include 180-183 (RSCD), Asn-191, and 221-223 (HIY). Asp-183 contacts (6R)-5,10-methylene-5,6,7,8-tetrahydrofolate. Ser-282 is a binding site for (6R)-5,10-methylene-5,6,7,8-tetrahydrofolate.

It belongs to the thymidylate synthase family. Bacterial-type ThyA subfamily. Homodimer.

It localises to the cytoplasm. The catalysed reaction is dUMP + (6R)-5,10-methylene-5,6,7,8-tetrahydrofolate = 7,8-dihydrofolate + dTMP. Its pathway is pyrimidine metabolism; dTTP biosynthesis. Its function is as follows. Catalyzes the reductive methylation of 2'-deoxyuridine-5'-monophosphate (dUMP) to 2'-deoxythymidine-5'-monophosphate (dTMP) while utilizing 5,10-methylenetetrahydrofolate (mTHF) as the methyl donor and reductant in the reaction, yielding dihydrofolate (DHF) as a by-product. This enzymatic reaction provides an intracellular de novo source of dTMP, an essential precursor for DNA biosynthesis. In Vibrio vulnificus (strain YJ016), this protein is Thymidylate synthase.